Reading from the N-terminus, the 372-residue chain is Aminodeoxyfutalosine synthase (372 aa).

In terms of domain architecture, Radical SAM core spans 53–292 (HKTYFVHSIR…VARLYLDNFP (240 aa)). Cys-69, Cys-73, and Cys-76 together coordinate [4Fe-4S] cluster.

Belongs to the radical SAM superfamily. MqnE family. Requires [4Fe-4S] cluster as cofactor.

The catalysed reaction is 3-[(1-carboxyvinyl)-oxy]benzoate + S-adenosyl-L-methionine + H2O = 6-amino-6-deoxyfutalosine + hydrogencarbonate + L-methionine + H(+). It functions in the pathway quinol/quinone metabolism; menaquinone biosynthesis. Functionally, radical SAM enzyme that catalyzes the addition of the adenosyl radical to the double bond of 3-[(1-carboxyvinyl)oxy]benzoate, leading to aminodeoxyfutalosine (AFL), a key intermediate in the formation of menaquinone (MK, vitamin K2) from chorismate. In Thermus thermophilus (strain ATCC 27634 / DSM 579 / HB8), this protein is Aminodeoxyfutalosine synthase.